We begin with the raw amino-acid sequence, 588 residues long: Interferon-activable protein 208 (588 aa).

A Pyrin domain is found at 5–92; it reads MVNYYKQIVL…VDILRKEMEK (88 aa). Disordered regions lie at residues 157–183 and 469–526; these read ATST…SLQT and EMQN…RRVN. Composition is skewed to polar residues over residues 172 to 183 and 470 to 487; these read RFPTTASSSLQT and MQNP…QPRL.

The protein belongs to the HIN-200 family.

In Mus musculus (Mouse), this protein is Interferon-activable protein 208.